The chain runs to 164 residues: ATP synthase subunit b (164 aa).

Residues 6–26 (GELVGNFILVTGSVIVLLLLI) traverse the membrane as a helical segment.

It belongs to the ATPase B chain family. In terms of assembly, F-type ATPases have 2 components, F(1) - the catalytic core - and F(0) - the membrane proton channel. F(1) has five subunits: alpha(3), beta(3), gamma(1), delta(1), epsilon(1). F(0) has three main subunits: a(1), b(2) and c(10-14). The alpha and beta chains form an alternating ring which encloses part of the gamma chain. F(1) is attached to F(0) by a central stalk formed by the gamma and epsilon chains, while a peripheral stalk is formed by the delta and b chains.

It localises to the cell membrane. In terms of biological role, f(1)F(0) ATP synthase produces ATP from ADP in the presence of a proton or sodium gradient. F-type ATPases consist of two structural domains, F(1) containing the extramembraneous catalytic core and F(0) containing the membrane proton channel, linked together by a central stalk and a peripheral stalk. During catalysis, ATP synthesis in the catalytic domain of F(1) is coupled via a rotary mechanism of the central stalk subunits to proton translocation. Its function is as follows. Component of the F(0) channel, it forms part of the peripheral stalk, linking F(1) to F(0). This is ATP synthase subunit b from Streptococcus pyogenes serotype M6 (strain ATCC BAA-946 / MGAS10394).